The primary structure comprises 1397 residues: MKDLLDIMRKKTDSDGHAPVEFDRIRIGLASPEMIKSWSHGEVKKPETINYRTFKPERDGLFCAKIFGPVKDYECLCGKYKRMKYKGVICEKCGVEVTTAKVRRERMGHIELASPVAHIWFLKSLPSRIGLLLDMTLRDIERVLYFESYVVTDPGMTPFEKYQLLNDEEYFTALEEHGDEFVAKMGAEAVQDLLKDIDLEAEISRLREEIPQTTSETKLKKASKRLKLMEAFKDSNNKPEWMVMNVLPVLPPDLRPLVPLEGGRFATSDLNDLYRRVINRNNRLKRLLDLAAPDIIVRNEKRMLQESVDALLDNGRRGRAITGSNKRPLKSLADMIKGKQGRFRQNLLGKRVDYSGRSVITVGPTLRLHQCGLPKKMALELFKPFIFAKLQASGQATTIKAAKKMVERETPEVWDVLASVIRQHPVMLNRAPTLHRLGLQAFEPILIEGKAIRLHPLVCAAFNADFDGDQMAVHVPLTLEAQLEARALMMSTNNILSPANGEPIIVPSQDVVLGLYYITRDAVNAKGEGMVFADTHEVNRALATGQVAIHARVKVRVHQTVINENGEREQQTIIVDTTPGRCLLWEVVPEGLSFDMINLEMTKKNISKLINSCYRKLGLKDTVIFADQLMYLGFRQATRSGVSVGMEDMLIPPTKHTIIDKAETEVREIEQQFEQGFVTAGERYNKVVDIWARTNDQVAKAMMDNLSYTLVKNKQGEDEKQKSFNSIYMMSDSGARGSAAQIRQLAGMRGLMAKPDGSIIETPIKANFREGLTVLQYFISTHGARKGLADTALKTANSGYLTRRLVDVAQDLVITEPDCGTRGGLVMTPFIQGGDVIEPLRDRVLGRVTAEDVRRASDDEVVLPRGTLIDEKIAAQLEEAGVDEVKVRSVIACESTFGVCAKCYGRDLARGHLVNPGESVGVMAAQSIGEPGTQLTMRTFHVGGAASRTSAANSVQVRNKGTVRFHNVKTVQHAKGHLVSVSRSGEIGIADELGRERERYKLPYGASILLKDGELVEAGGIVATWDPHTHPLVTEVAGKARFSQIADGVTATSKTDDATGMTTVEILPVTARPASGKDLRPAIVLDTTDGGEQFYFLPQNTIVTVRDGETIGVGDVIGRVPQESSRTRDITGGLPRVADLFEARKPKEHAILAEVSGIVSFGKETKGKNRLVITPDDGSEIYEELIPKWRQINVFEGEHVNRGETISDGPQNPHDILRLKGEVALTNYIVNEVQDVYRLQGVKINDKHIEVIVRQMLRKVDIIDGGDTSFIKGEQVDYIRVVQENQAVLAQNKFPAKFERQLMGITKASLSTDSFISAASFQETTRVLTEAAVTGKEDDLRGLKENVVVGRLIPAGTGLAYHLERRRQEAEAAEHALHNDFSEVDQAFSQALNSEQF.

Residues Cys-75, Cys-77, Cys-90, and Cys-93 each contribute to the Zn(2+) site. Asp-465, Asp-467, and Asp-469 together coordinate Mg(2+). The Zn(2+) site is built by Cys-819, Cys-893, Cys-900, and Cys-903.

It belongs to the RNA polymerase beta' chain family. In terms of assembly, the RNAP catalytic core consists of 2 alpha, 1 beta, 1 beta' and 1 omega subunit. When a sigma factor is associated with the core the holoenzyme is formed, which can initiate transcription. Mg(2+) is required as a cofactor. Zn(2+) serves as cofactor.

It carries out the reaction RNA(n) + a ribonucleoside 5'-triphosphate = RNA(n+1) + diphosphate. Its function is as follows. DNA-dependent RNA polymerase catalyzes the transcription of DNA into RNA using the four ribonucleoside triphosphates as substrates. The polypeptide is DNA-directed RNA polymerase subunit beta' (Acinetobacter baumannii (strain SDF)).